We begin with the raw amino-acid sequence, 56 residues long: Cruciferin (56 aa).

Thr45 is modified (phosphothreonine).

It belongs to the 11S seed storage protein (globulins) family. Hexamer; each subunit is composed of an acidic and a basic chain derived from a single precursor and linked by a disulfide bond.

In terms of biological role, this is a seed storage protein. The sequence is that of Cruciferin from Sinapis alba (White mustard).